The chain runs to 268 residues: Tryptophan synthase alpha chain (268 aa).

Residues Glu-49 and Asp-60 each act as proton acceptor in the active site.

Belongs to the TrpA family. As to quaternary structure, tetramer of two alpha and two beta chains.

It carries out the reaction (1S,2R)-1-C-(indol-3-yl)glycerol 3-phosphate + L-serine = D-glyceraldehyde 3-phosphate + L-tryptophan + H2O. It functions in the pathway amino-acid biosynthesis; L-tryptophan biosynthesis; L-tryptophan from chorismate: step 5/5. The alpha subunit is responsible for the aldol cleavage of indoleglycerol phosphate to indole and glyceraldehyde 3-phosphate. The sequence is that of Tryptophan synthase alpha chain from Escherichia coli O6:K15:H31 (strain 536 / UPEC).